A 518-amino-acid polypeptide reads, in one-letter code: Protein translocase subunit SecD (518 aa).

The next 6 helical transmembrane spans lie at 9 to 29 (IFLS…NFMQ), 361 to 381 (LIGF…LGLF), 384 to 404 (IALS…QATL), 406 to 426 (LPGI…NVLI), 452 to 474 (FATI…IFGV), and 486 to 506 (IGII…IDIW).

It belongs to the SecD/SecF family. SecD subfamily. Forms a complex with SecF. Part of the essential Sec protein translocation apparatus which comprises SecA, SecYEG and auxiliary proteins SecDF-YajC and YidC.

Its subcellular location is the cell inner membrane. Part of the Sec protein translocase complex. Interacts with the SecYEG preprotein conducting channel. SecDF uses the proton motive force (PMF) to complete protein translocation after the ATP-dependent function of SecA. This chain is Protein translocase subunit SecD, found in Rickettsia felis (strain ATCC VR-1525 / URRWXCal2) (Rickettsia azadi).